Reading from the N-terminus, the 132-residue chain is Small ribosomal subunit protein uS8 (132 aa).

It belongs to the universal ribosomal protein uS8 family. In terms of assembly, part of the 30S ribosomal subunit. Contacts proteins S5 and S12.

Its function is as follows. One of the primary rRNA binding proteins, it binds directly to 16S rRNA central domain where it helps coordinate assembly of the platform of the 30S subunit. The chain is Small ribosomal subunit protein uS8 from Bacillus subtilis (strain 168).